A 339-amino-acid polypeptide reads, in one-letter code: Dihydroorotate dehydrogenase (quinone) (339 aa).

FMN is bound by residues 62-66 and Thr86; that span reads AGMDK. Lys66 contacts substrate. Substrate is bound at residue 111-115; the sequence is NRMGF. Residues Asn139 and Asn172 each coordinate FMN. Position 172 (Asn172) interacts with substrate. Residue Ser175 is the Nucleophile of the active site. Asn177 is a substrate binding site. Residues Lys217 and Thr245 each coordinate FMN. 246 to 247 contacts substrate; that stretch reads NT. FMN-binding positions include Gly268, Gly297, and 318–319; that span reads YS.

This sequence belongs to the dihydroorotate dehydrogenase family. Type 2 subfamily. As to quaternary structure, monomer. It depends on FMN as a cofactor.

Its subcellular location is the cell membrane. The catalysed reaction is (S)-dihydroorotate + a quinone = orotate + a quinol. It participates in pyrimidine metabolism; UMP biosynthesis via de novo pathway; orotate from (S)-dihydroorotate (quinone route): step 1/1. In terms of biological role, catalyzes the conversion of dihydroorotate to orotate with quinone as electron acceptor. The polypeptide is Dihydroorotate dehydrogenase (quinone) (Shewanella baltica (strain OS155 / ATCC BAA-1091)).